The sequence spans 325 residues: Putative 1-aminocyclopropane-1-carboxylate deaminase (325 aa).

Lys-54 carries the N6-(pyridoxal phosphate)lysine modification.

The protein belongs to the ACC deaminase/D-cysteine desulfhydrase family. The cofactor is pyridoxal 5'-phosphate.

It catalyses the reaction 1-aminocyclopropane-1-carboxylate + H2O = 2-oxobutanoate + NH4(+). The protein is Putative 1-aminocyclopropane-1-carboxylate deaminase of Pyrococcus horikoshii (strain ATCC 700860 / DSM 12428 / JCM 9974 / NBRC 100139 / OT-3).